The sequence spans 115 residues: NADH-ubiquinone oxidoreductase chain 3 (115 aa).

The next 3 helical transmembrane spans lie at 4–24 (FIVL…AFWL), 55–75 (FFLV…LLPL), and 87–107 (TMLT…YEWL).

Belongs to the complex I subunit 3 family. Core subunit of respiratory chain NADH dehydrogenase (Complex I) which is composed of 45 different subunits. Interacts with TMEM186. Interacts with TMEM242.

It is found in the mitochondrion inner membrane. It carries out the reaction a ubiquinone + NADH + 5 H(+)(in) = a ubiquinol + NAD(+) + 4 H(+)(out). Core subunit of the mitochondrial membrane respiratory chain NADH dehydrogenase (Complex I) which catalyzes electron transfer from NADH through the respiratory chain, using ubiquinone as an electron acceptor. Essential for the catalytic activity of complex I. This Reithrodontomys megalotis (Western harvest mouse) protein is NADH-ubiquinone oxidoreductase chain 3.